A 484-amino-acid chain; its full sequence is Sperm motility kinase 2B (484 aa).

Residues 8-256 (YVMLETIGHG…VAEVMVHPWV (249 aa)) enclose the Protein kinase domain. ATP is bound by residues 14–22 (IGHGGCSKV) and Lys37. Asp127 serves as the catalytic Proton acceptor. Residues 272–314 (PLKPNPAIVKAMGYIGFQAQDIEDSLRQRKFNETMASYCLLKK) form the UBA domain. 2 stretches are compositionally biased toward polar residues: residues 356–373 (PTSL…CGRS) and 422–434 (SSDD…TSAS). Disordered stretches follow at residues 356 to 400 (PTSL…TMDH) and 422 to 450 (SSDD…RGIK).

This sequence belongs to the protein kinase superfamily. CAMK Ser/Thr protein kinase family. Smok subfamily. In terms of tissue distribution, testis-specific. Expressed in the testis from 22 days postpartum (22 dpp).

The enzyme catalyses L-seryl-[protein] + ATP = O-phospho-L-seryl-[protein] + ADP + H(+). It catalyses the reaction L-threonyl-[protein] + ATP = O-phospho-L-threonyl-[protein] + ADP + H(+). Functionally, may play a role in sperm motility, especially in the regulation of flagellar function. In Mus musculus (Mouse), this protein is Sperm motility kinase 2B.